Consider the following 483-residue polypeptide: Transmembrane protein 39B (483 aa).

A glycan (N-linked (GlcNAc...) asparagine) is linked at N9. 7 helical membrane passes run 76–96 (HLLF…VHYI), 114–134 (TSLN…IVLA), 158–182 (LLVA…ILLF), 187–207 (FFNL…LQLG), 281–301 (EVLL…VWFV), 414–434 (VLNI…YSLL), and 440–460 (HHTI…FKLL).

The protein belongs to the TMEM39 family.

Its subcellular location is the endoplasmic reticulum membrane. Functionally, may protect the cells against DNA damage caused by exposure to the cold-warming stress and facilitates tissue damage repair during the recovery phase. This Xenopus tropicalis (Western clawed frog) protein is Transmembrane protein 39B.